Here is a 273-residue protein sequence, read N- to C-terminus: Epidermal growth factor-like protein 7 (273 aa).

An N-terminal signal peptide occupies residues 1–23 (MRGSQEVLLMWLLVLAVGGTEHA). The EMI domain maps to 27–104 (GRRVCAVRAH…TSGLPGACGA (78 aa)). 9 disulfide bridges follow: C31–C89, C56–C62, C88–C102, C107–C117, C111–C123, C125–C134, C141–C152, C148–C161, and C163–C176. One can recognise an EGF-like 1 domain in the interval 103–135 (GAAICQPPCRNGGSCVQPGRCRCPAGWRGDTCQ). Residues 130-132 (RGD) carry the Cell attachment site motif. In terms of domain architecture, EGF-like 2; calcium-binding spans 137 to 177 (DVDECSARRGGCPQRCVNTAGSYWCQCWEGHSLSADGTLCV). A coiled-coil region spans residues 192–219 (VDSAMKEEVQRLQSRVDLLEEKLQLVLA).

As to quaternary structure, interacts with ITGAV/ITGB3 in an RGD-dependent manner, increasing endothelial cell's motility.

It localises to the secreted. Its subcellular location is the extracellular space. Functionally, regulates vascular tubulogenesis in vivo. Inhibits platelet-derived growth factor (PDGF)-BB-induced smooth muscle cell migration and promotes endothelial cell adhesion to the extracellular matrix and angiogenesis. This is Epidermal growth factor-like protein 7 (EGFL7) from Homo sapiens (Human).